The chain runs to 216 residues: MOB kinase activator 3B (216 aa).

The Zn(2+) site is built by cysteine 82, cysteine 87, histidine 164, and histidine 169.

In terms of biological role, modulates LATS1 expression in the Hippo signaling pathway which plays a pivotal role in organ size control and tumor suppression by restricting proliferation and promoting apoptosis. This chain is MOB kinase activator 3B (Mob3b), found in Mus musculus (Mouse).